We begin with the raw amino-acid sequence, 821 residues long: Xylosyltransferase 1 (821 aa).

The interval 1-121 (YFSHRPKEKV…PETKSDQVPK (121 aa)) is disordered. Residues 1–821 (YFSHRPKEKV…GAVKPDGRLR (821 aa)) lie on the Lumenal side of the membrane. The segment covering 9-25 (KVRTDSNNENSVPKDFE) has biased composition (basic and acidic residues). Polar residues predominate over residues 27–36 (VDNSNFAPRT). Basic and acidic residues-rich tracts occupy residues 41–58 (HQPELAKKPLSRQKERLQ) and 76–87 (GPKEVLPPREKA). Asparagine 90 is a glycosylation site (N-linked (GlcNAc...) asparagine). 4 disulfides stabilise this stretch: cysteine 122–cysteine 150, cysteine 166–cysteine 407, cysteine 426–cysteine 439, and cysteine 428–cysteine 437. UDP-alpha-D-xylose-binding positions include valine 198, aspartate 226, and 255–257 (TIW). An N-linked (GlcNAc...) asparagine glycan is attached at asparagine 286. Position 359–360 (359–360 (DW)) interacts with UDP-alpha-D-xylose. Residues serine 440 and 463 to 464 (RK) contribute to the UDP-alpha-D-xylose site. Intrachain disulfides connect cysteine 540/cysteine 789 and cysteine 782/cysteine 795. Asparagine 642 is a glycosylation site (N-linked (GlcNAc...) asparagine). The tract at residues 801-821 (SSFSPDPKSELGAVKPDGRLR) is disordered.

This sequence belongs to the glycosyltransferase 14 family. XylT subfamily. Monomer. The cofactor is a divalent metal cation. In terms of processing, contains 7 disulfide bonds. Post-translationally, N-glycosylated.

It is found in the golgi apparatus membrane. It catalyses the reaction UDP-alpha-D-xylose + L-seryl-[protein] = 3-O-(beta-D-xylosyl)-L-seryl-[protein] + UDP + H(+). Its pathway is glycan metabolism; chondroitin sulfate biosynthesis. It functions in the pathway glycan metabolism; heparan sulfate biosynthesis. Its function is as follows. Catalyzes the first step in the biosynthesis of chondroitin sulfate and dermatan sulfate proteoglycans, such as DCN. Transfers D-xylose from UDP-D-xylose to specific serine residues of the core protein. Required for normal maturation of chondrocytes during bone development, normal onset of ossification and normal embryonic and postnatal skeleton development, especially of the long bones. This is Xylosyltransferase 1 (Xylt1) from Rattus norvegicus (Rat).